The following is a 119-amino-acid chain: Large ribosomal subunit protein uL18 (119 aa).

It belongs to the universal ribosomal protein uL18 family. Part of the 50S ribosomal subunit; part of the 5S rRNA/L5/L18/L25 subcomplex. Contacts the 5S and 23S rRNAs.

Functionally, this is one of the proteins that bind and probably mediate the attachment of the 5S RNA into the large ribosomal subunit, where it forms part of the central protuberance. This Clostridium botulinum (strain Okra / Type B1) protein is Large ribosomal subunit protein uL18.